The primary structure comprises 245 residues: 2,3-bisphosphoglycerate-dependent phosphoglycerate mutase 1 (245 aa).

Substrate is bound by residues 8 to 15 (RHGQSLWN), 21 to 22 (TG), Arg-60, 87 to 90 (ERHY), Lys-98, 114 to 115 (RR), and 183 to 184 (GN). The active-site Tele-phosphohistidine intermediate is the His-9. Glu-87 serves as the catalytic Proton donor/acceptor.

Belongs to the phosphoglycerate mutase family. BPG-dependent PGAM subfamily.

The catalysed reaction is (2R)-2-phosphoglycerate = (2R)-3-phosphoglycerate. It participates in carbohydrate degradation; glycolysis; pyruvate from D-glyceraldehyde 3-phosphate: step 3/5. Functionally, catalyzes the interconversion of 2-phosphoglycerate and 3-phosphoglycerate. This chain is 2,3-bisphosphoglycerate-dependent phosphoglycerate mutase 1, found in Bacillus cereus (strain ATCC 10987 / NRS 248).